The sequence spans 1059 residues: Cellulose synthase catalytic subunit A [UDP-forming] (1059 aa).

Disordered stretches follow at residues 1-159 (MDRN…RFDT) and 174-220 (MRQH…KHVA). A compositionally biased stretch (low complexity) spans 15-36 (NNINSSGGSYNNSMNNSSNNIG). Polar residues-rich tracts occupy residues 40-57 (GNNQ…QSNL) and 142-154 (NSPS…TSGG). The segment covering 181–194 (QEQQQQQQQQQQQQ) has biased composition (low complexity). The segment covering 204-219 (QKKKPSSMQLSKKKHV) has biased composition (basic residues). 3 consecutive transmembrane segments (helical) span residues 246-266 (FSHA…IFYF), 280-300 (ITFS…LGSA), and 306-323 (FTNP…QILA). The segment at 328 to 628 (KHPTVMMYVC…FLGLLDADQQ (301 aa)) is catalytic subdomain A. Asp-370 is an active-site residue. Substrate-binding residues include Asp-624 and Asp-626. A catalytic subdomain B region spans residues 701–761 (QPLYDIGGIM…EQRKRWAQGA (61 aa)). Asp-717 is an active-site residue. The next 2 helical transmembrane spans lie at 790–810 (IYPF…IMSI) and 813–833 (VPIV…PVMV). A disordered region spans residues 933-953 (DNAQESSGKHKAEQSFRTSNK). Over residues 939-953 (SGKHKAEQSFRTSNK) the composition is skewed to basic and acidic residues. A run of 3 helical transmembrane segments spans residues 963-983 (LFLP…SAVL), 993-1013 (WLLV…WSFI), and 1035-1055 (IVLF…KVCI).

The protein belongs to the glycosyltransferase 2 family. It depends on Mg(2+) as a cofactor.

The protein resides in the membrane. It carries out the reaction [(1-&gt;4)-beta-D-glucosyl](n) + UDP-alpha-D-glucose = [(1-&gt;4)-beta-D-glucosyl](n+1) + UDP + H(+). The protein operates within glycan metabolism; amoeba cellulose biosynthesis. Its function is as follows. Catalytic subunit of cellulose synthase. It incorporates glucose from uridine 5'-diphosphate glucose (UDP-alpha-D-glucose) to cellulose (a (1-&gt;4)-beta-D-glucan), which is produced as an extracellular component for mechanical and chemical protection at the onset of the stalk formation, when the cells exhibit multicellular behavior during culmination. This is Cellulose synthase catalytic subunit A [UDP-forming] (dcsA) from Dictyostelium discoideum (Social amoeba).